Here is a 132-residue protein sequence, read N- to C-terminus: Small ribosomal subunit protein uS8c (132 aa).

This sequence belongs to the universal ribosomal protein uS8 family. In terms of assembly, part of the 30S ribosomal subunit.

Its subcellular location is the plastid. It is found in the chloroplast. One of the primary rRNA binding proteins, it binds directly to 16S rRNA central domain where it helps coordinate assembly of the platform of the 30S subunit. The protein is Small ribosomal subunit protein uS8c (rps8) of Buxus microphylla (Littleleaf boxwood).